We begin with the raw amino-acid sequence, 306 residues long: MIFQRTVQKMVKATGVGLHSGNKVTLSIMPAPVNTGIVLVRTDMNPAVAIPAKAEQVRETTMCTALVNDEGIRISTIEHLFAALAGLGIDNAVIEVDAPEIPIMDGSASPFVFLLQSAGIKEQAAPKKYLKIKRPVRVEDGDKWAELKPFKGFRVNFKIDFAHPEIARSQQHVVMDFSTSAFVKDISRARTFGFMRDIEYLRANNLALGGSMENAVVLDEYRVLNPDGLRYEDEFVKHKILDAFGDLYVAGHAILGEFTAYKTGHALNNQLVRALLAQQDAWELVSFEKEADVPVSFTVPGGAVYA.

Positions 79, 238, and 242 each coordinate Zn(2+). H265 (proton donor) is an active-site residue.

This sequence belongs to the LpxC family. The cofactor is Zn(2+).

It carries out the reaction a UDP-3-O-[(3R)-3-hydroxyacyl]-N-acetyl-alpha-D-glucosamine + H2O = a UDP-3-O-[(3R)-3-hydroxyacyl]-alpha-D-glucosamine + acetate. The protein operates within glycolipid biosynthesis; lipid IV(A) biosynthesis; lipid IV(A) from (3R)-3-hydroxytetradecanoyl-[acyl-carrier-protein] and UDP-N-acetyl-alpha-D-glucosamine: step 2/6. In terms of biological role, catalyzes the hydrolysis of UDP-3-O-myristoyl-N-acetylglucosamine to form UDP-3-O-myristoylglucosamine and acetate, the committed step in lipid A biosynthesis. This chain is UDP-3-O-acyl-N-acetylglucosamine deacetylase, found in Shewanella sp. (strain ANA-3).